The following is a 205-amino-acid chain: N-(5'-phosphoribosyl)anthranilate isomerase (205 aa).

It belongs to the TrpF family.

The enzyme catalyses N-(5-phospho-beta-D-ribosyl)anthranilate = 1-(2-carboxyphenylamino)-1-deoxy-D-ribulose 5-phosphate. Its pathway is amino-acid biosynthesis; L-tryptophan biosynthesis; L-tryptophan from chorismate: step 3/5. The sequence is that of N-(5'-phosphoribosyl)anthranilate isomerase from Maridesulfovibrio salexigens (strain ATCC 14822 / DSM 2638 / NCIMB 8403 / VKM B-1763) (Desulfovibrio salexigens).